The primary structure comprises 422 residues: 5-hydroxytryptamine receptor 1A (422 aa).

The tract at residues 1-23 (MDVLSPGQGNNTTSPPAPFETGG) is disordered. Residues 1–38 (MDVLSPGQGNNTTSPPAPFETGGNTTGISDVTVSYQVI) are Extracellular-facing. N-linked (GlcNAc...) asparagine glycans are attached at residues N10, N11, and N24. The helical transmembrane segment at 39–59 (TSLLLGTLIFCAVLGNACVVA) threads the bilayer. Residues 60–73 (AIALERSLQNVANY) lie on the Cytoplasmic side of the membrane. Residues 74–98 (LIGSLAVTDLMVSVLVLPMAALYQV) form a helical membrane-spanning segment. The Extracellular segment spans residues 99–107 (LNKWTLGQV). Residues 108 to 132 (TCDLFIALDVLCCTSSILHLCAIAL) form a helical membrane-spanning segment. An intrachain disulfide couples C109 to C187. 2 residues coordinate serotonin: D116 and C120. Positions 133–135 (DRY) match the DRY motif; important for ligand-induced conformation changes motif. Residues 133–152 (DRYWAITDPIDYVNKRTPRR) lie on the Cytoplasmic side of the membrane. A helical membrane pass occupies residues 153–174 (AAALISLTWLIGFLISIPPMLG). Topologically, residues 175–193 (WRTPEDRSDPDACTISKDH) are extracellular. Residues 194–216 (GYTIYSTFGAFYIPLLLMLVLYG) form a helical membrane-spanning segment. At 217-346 (RIFRAARFRI…LARERKTVKT (130 aa)) the chain is on the cytoplasmic side. The segment at 235 to 262 (KTGADTRHGASPAPQPKKSVNGESGSRN) is disordered. The 1D-myo-inositol 4-phosphate site is built by T314, K345, T346, and G352. Residues 347-370 (LGIIMGTFILCWLPFFIVALVLPF) form a helical membrane-spanning segment. Over 371–378 (CESSCHMP) the chain is Extracellular. The helical transmembrane segment at 379–403 (TLLGAIINWLGYSNSLLNPVIYAYF) threads the bilayer. An NPxxY motif; important for ligand-induced conformation changes and signaling motif is present at residues 396-400 (NPVIY). Residues F403, N404, and K405 each coordinate 1D-myo-inositol 4-phosphate. The Cytoplasmic portion of the chain corresponds to 404–422 (NKDFQNAFKKIIKCKFCRQ).

The protein belongs to the G-protein coupled receptor 1 family. 5-hydroxytryptamine receptor subfamily. HTR1A sub-subfamily. As to quaternary structure, heterodimer; heterodimerizes with GPER1. Interacts with YIF1B. Interacts with GPR39 and GALR1. As to expression, detected in lymph nodes, thymus and spleen. Detected in activated T-cells, but not in resting T-cells.

It is found in the cell membrane. The protein localises to the cell projection. Its subcellular location is the dendrite. G-protein coupled receptor activity is regulated by lipids: phosphatidylinositol 4-phosphate increases HTR1A-mediated activity. Binding to aripiprazol drug is regulated by cholesterol, which shapes the ligand-binding pocket, determining the specificity for aripiprazol. Activated by IHCH-7179 small molecule: IHCH-7179 acts both as an agonist activator for HTR1A and as an antagonist inhibitor for HTR2A. Activated by SEP-363856 small molecule: IHCH-7179 acts both as an agonist activator for HTR1A and TAAR1. In terms of biological role, G-protein coupled receptor for 5-hydroxytryptamine (serotonin). Also functions as a receptor for various drugs and psychoactive substances. Ligand binding causes a conformation change that triggers signaling via guanine nucleotide-binding proteins (G proteins) and modulates the activity of downstream effectors, such as adenylate cyclase. HTR1A is coupled to G(i)/G(o) G alpha proteins and mediates inhibitory neurotransmission: signaling inhibits adenylate cyclase activity and activates a phosphatidylinositol-calcium second messenger system that regulates the release of Ca(2+) ions from intracellular stores. Beta-arrestin family members regulate signaling by mediating both receptor desensitization and resensitization processes. Plays a role in the regulation of 5-hydroxytryptamine release and in the regulation of dopamine and 5-hydroxytryptamine metabolism. Plays a role in the regulation of dopamine and 5-hydroxytryptamine levels in the brain, and thereby affects neural activity, mood and behavior. Plays a role in the response to anxiogenic stimuli. This is 5-hydroxytryptamine receptor 1A from Homo sapiens (Human).